The sequence spans 359 residues: 4-galactosyl-N-acetylglucosaminide 3-alpha-L-fucosyltransferase FUT6 (359 aa).

The Cytoplasmic portion of the chain corresponds to 1 to 14 (MDPLGPAKPQWSWR). The chain crosses the membrane as a helical; Signal-anchor for type II membrane protein span at residues 15–34 (CCLTTLLFQLLMAVCFFSYL). Residues 35-359 (RVSQDDPTVY…QTRGIAAWFT (325 aa)) lie on the Lumenal side of the membrane. N-linked (GlcNAc...) asparagine glycosylation is found at Asn-46, Asn-91, Asn-153, and Asn-184. Residues 73 to 112 (KPIALPRCSEMVPGTADCNITADRKVYPQADAVIVHHREV) are determines site-specific fucosylation.

This sequence belongs to the glycosyltransferase 10 family. Homodimer and monomer. Monomer (secreted form). Post-translationally, N-glycosylated. In terms of processing, proteolytic cleavage releases a secreted glycoform of 43 kDa. As to expression, kidney, liver, colon, small intestine, bladder, uterus and salivary gland.

The protein resides in the golgi apparatus. The protein localises to the golgi stack membrane. It localises to the secreted. The catalysed reaction is a beta-D-galactosyl-(1-&gt;4)-N-acetyl-beta-D-glucosaminyl derivative + GDP-beta-L-fucose = a beta-D-galactosyl-(1-&gt;4)-[alpha-L-fucosyl-(1-&gt;3)]-N-acetyl-beta-D-glucosaminyl derivative + GDP + H(+). It carries out the reaction an N-acetyl-alpha-neuraminyl-(2-&gt;3)-beta-D-galactosyl-(1-&gt;4)-N-acetyl-beta-D-glucosaminyl derivative + GDP-beta-L-fucose = an alpha-Neu5Ac-(2-&gt;3)-beta-D-Gal-(1-&gt;4)-[alpha-L-Fuc-(1-&gt;3)]-beta-D-GlcNAc derivative + GDP + H(+). It catalyses the reaction an alpha-Neu5Ac-(2-&gt;3)-beta-D-Gal-(1-&gt;4)-beta-D-GlcNAc-(1-&gt;3)-beta-D-Gal-(1-&gt;4)-[alpha-L-Fuc-(1-&gt;3)]-beta-D-GlcNAc derivative + GDP-beta-L-fucose = an alpha-Neu5Ac-(2-&gt;3)-beta-D-Gal-(1-&gt;4)-[alpha-L-Fuc-(1-&gt;3)]-beta-D-GlcNAc-(1-&gt;3)-beta-D-Gal-(1-&gt;4)-[alpha-L-Fuc-(1-&gt;3)]-beta-D-GlcNAc derivative + GDP + H(+). The enzyme catalyses a neolactoside nLc6Cer + GDP-beta-L-fucose = beta-D-Gal-(1-&gt;4)-[alpha-L-Fuc-(1-&gt;3)]-beta-D-GlcNAc-(1-&gt;3)-beta-D-Gal-(1-&gt;4)-beta-D-GlcNAc-(1-&gt;3)-beta-D-Gal-(1-&gt;4)-beta-D-Glc-(1&lt;-&gt;1')-Cer + GDP + H(+). The catalysed reaction is a neolactoside nLc6Cer + GDP-beta-L-fucose = beta-D-galactosyl-(1-&gt;4)-N-acetyl-beta-D-glucosaminyl-(1-&gt;3)-beta-D-galactosyl-(1-&gt;4)-[alpha-L-fucosyl-(1-&gt;3)]-N-acetyl-beta-D-glucosaminyl-(1-&gt;3)-beta-D-galactosyl-(1-&gt;4)-beta-D-glucosyl-(1&lt;-&gt;1')-ceramide + GDP + H(+). It carries out the reaction a neolactoside VI(3)-alpha-NeuNAc-nLc6Cer + GDP-beta-L-fucose = a neolactoside VI(3)-alpha-NeuAc,V(3)-alphaFuc-nLc6Cer + GDP + H(+). It catalyses the reaction beta-D-galactosyl-(1-&gt;4)-N-acetyl-D-glucosamine + GDP-beta-L-fucose = beta-D-galactosyl-(1-&gt;4)-[alpha-L-fucosyl-(1-&gt;3)]-N-acetyl-D-glucosamine + GDP + H(+). The enzyme catalyses N-acetyl-alpha-neuraminosyl-(2-&gt;3)-beta-D-galactosyl-(1-&gt;4)-N-acetyl-beta-D-glucosamine + GDP-beta-L-fucose = N-acetyl-alpha-neuraminosyl-(2-&gt;3)-beta-D-galactosyl-(1-&gt;4)-[alpha-L-fucosyl-(1-&gt;3)]-N-acetyl-beta-D-glucosamine + GDP + H(+). The catalysed reaction is lactose + GDP-beta-L-fucose = beta-D-galactosyl-(1-&gt;4)-[alpha-L-fucosyl-(1-&gt;3)]-D-glucose + GDP + H(+). It carries out the reaction alpha-L-Fuc-(1-&gt;2)-beta-D-Gal-(1-&gt;4)-D-Glc + GDP-beta-L-fucose = alpha-L-Fuc-(1-&gt;2)-beta-D-Gal-(1-&gt;4)-[alpha-L-Fuc-(1-&gt;3)]-D-Glc + GDP + H(+). It catalyses the reaction a beta-D-galactosyl-(1-&gt;4)-N-acetyl-beta-D-6-sulfooxy-glucosaminyl derivative + GDP-beta-L-fucose = a beta-D-galactosyl-(1-&gt;4)-[alpha-L-fucosyl-(1-&gt;3)]-N-acetyl-beta-D-6-sulfooxy-glucosaminyl derivative + GDP + H(+). It functions in the pathway protein modification; protein glycosylation. Functionally, catalyzes the transfer of L-fucose, from a guanosine diphosphate-beta-L-fucose, to the N-acetyl glucosamine (GlcNAc) of a distal alpha2,3 sialylated lactosamine unit of a glycoprotein- or a glycolipid-linked sialopolylactosamines chain or of a distal or internal lactosamine unit of a neutral glycoprotein- or a glycolipid-linked polylactosamines chain through an alpha-1,3 glycosidic linkage and participates in surface expression of the sialyl Lewis X (sLe(x)), Lewis X (Le(x)) and non sialylated VIM2 determinants. Moreover transfers fucose to H-type 2 (Fucalpha1-2Galbeta1-4GlcNAc) chain acceptor substrates and participates in difucosylated sialyl Lewis x determinants. Also fucosylates a polylactosamine substrate having a 6 sulfate modification at the GlcNAc moiety and gives rise to sialyl and non-sialyl 6-sulfo lewis X. Does not have activity towards type 1 ((Galbeta1-3GlcNAc)) and H-type 1 chain (Fucalpha1-2Galbeta1-3GlcNAc) acceptors substrates. In terms of biological role, does not have alpha(1,3)-fucosyltransferase activity. The chain is 4-galactosyl-N-acetylglucosaminide 3-alpha-L-fucosyltransferase FUT6 from Homo sapiens (Human).